Here is a 183-residue protein sequence, read N- to C-terminus: Ras-related protein Rap-2a (183 aa).

10 to 17 (GSGGVGKS) is a binding site for GTP. Positions 32–40 (YDPTIEDFY) match the Effector region motif. GTP-binding positions include 57–61 (DTAGT) and 116–119 (NKVD). Residues Cys-176 and Cys-177 are each lipidated (S-palmitoyl cysteine). Residue Cys-180 is modified to Cysteine methyl ester. A lipid anchor (S-farnesyl cysteine) is attached at Cys-180. Positions 181–183 (NIQ) are cleaved as a propeptide — removed in mature form.

The protein belongs to the small GTPase superfamily. Ras family. As to quaternary structure, interacts with PLCE1. Interacts with ARHGAP29, SGSM1, SGSM2 and SGSM3. Interacts (GTP-bound form preferentially) with MAP4K4. Interacts with MINK1. Interacts with cytoskeletal actin. Interacts (GTP-bound form) with RUNDC3A. Interacts (GTP-bound form preferentially) with TNIK (via the CNH domain); the interaction is direct and recruits RAP2A to the E3 ubiquitin ligase NEDD4. Interacts with RGS14; the interaction is GTP-dependent. In terms of processing, ubiquitinated; undergoes 'Lys-63' monoubiquitination and diubiquitination by NEDD4. Multiple lysine residues are probably modified. Ubiquitination requires TNIK, prevents interaction with effectors and inactivates RAP2A. Ubiquitination by the ECS(RAB40B) complex leads to RAP2A localization to lamellipodia plasma membrane, activation, and regulation of sorting at early endosomes for recycling to the lamellipodia plasma membrane. Post-translationally, palmitoylated. Palmitoylation is required for association with recycling endosome membranes and activation of TNIK. In terms of tissue distribution, expressed in granular layer of the cerebellum, forebrain, striatum, layer V of the cortex, olfactory cortex, tubercules, subthalamic and hippocampus, particularly in the CA2 region, to a lesser extent in the CA1 region and the external layer of the dentate gyrus. Expressed in neurons.

It localises to the midbody. It is found in the cell projection. The protein localises to the lamellipodium membrane. The protein resides in the golgi apparatus. Its subcellular location is the recycling endosome membrane. It localises to the lysosome. The catalysed reaction is GTP + H2O = GDP + phosphate + H(+). Its activity is regulated as follows. Activated by the guanine nucleotide-exchange factors RAPGEF3 and RAPGEF4 in a cAMP-dependent manner. Nucleotide exchange is also specifically stimulated by RAPGEF5, RASGEF1A and RASGEF1B. Functionally, small GTP-binding protein which cycles between a GDP-bound inactive and a GTP-bound active form. In its active form interacts with and regulates several effectors including MAP4K4, MINK1 and TNIK. Part of a signaling complex composed of NEDD4, RAP2A and TNIK which regulates neuronal dendrite extension and arborization during development. More generally, it is part of several signaling cascades and may regulate cytoskeletal rearrangements, cell migration, cell adhesion and cell spreading. In Mus musculus (Mouse), this protein is Ras-related protein Rap-2a.